A 547-amino-acid polypeptide reads, in one-letter code: Chaperonin GroEL (547 aa).

ATP-binding positions include 30–33 (TLGP), K51, 87–91 (DGTTT), G415, and D496. Residues 528 to 547 (DKSDMPAMPPGGMGGMGGMY) form a disordered region. The span at 538–547 (GGMGGMGGMY) shows a compositional bias: gly residues.

This sequence belongs to the chaperonin (HSP60) family. In terms of assembly, forms a cylinder of 14 subunits composed of two heptameric rings stacked back-to-back. Interacts with the co-chaperonin GroES.

It localises to the cytoplasm. It carries out the reaction ATP + H2O + a folded polypeptide = ADP + phosphate + an unfolded polypeptide.. Together with its co-chaperonin GroES, plays an essential role in assisting protein folding. The GroEL-GroES system forms a nano-cage that allows encapsulation of the non-native substrate proteins and provides a physical environment optimized to promote and accelerate protein folding. This chain is Chaperonin GroEL, found in Chlorobium luteolum (strain DSM 273 / BCRC 81028 / 2530) (Pelodictyon luteolum).